The sequence spans 440 residues: Trigger factor (440 aa).

Residues 163–248 (GDTVNIDFDG…INEIKYKNVP (86 aa)) form the PPIase FKBP-type domain.

It belongs to the FKBP-type PPIase family. Tig subfamily.

Its subcellular location is the cytoplasm. The catalysed reaction is [protein]-peptidylproline (omega=180) = [protein]-peptidylproline (omega=0). In terms of biological role, involved in protein export. Acts as a chaperone by maintaining the newly synthesized protein in an open conformation. Functions as a peptidyl-prolyl cis-trans isomerase. The sequence is that of Trigger factor from Staphylococcus carnosus (strain TM300).